The chain runs to 579 residues: Protein LYRIC (579 aa).

At 1–48 (MAARSWQDELAQQAEEGSARLRELLSVGLGFLRTELGLDLGLEPKRYP) the chain is on the lumenal side. Residues 1–71 (MAARSWQDEL…LLLFLLGYGW (71 aa)) form an activation of NF-kappa-B region. A helical membrane pass occupies residues 49-69 (GWVILVGTGALGLLLLFLLGY). The Cytoplasmic segment spans residues 70 to 579 (GWAAACAGAR…KKKKKARRET (510 aa)). The segment at 72–168 (AAACAGARKK…EKSKKNKKKS (97 aa)) is interaction with BCCIP. The interval 78-222 (ARKKRRSPPR…SGSLDSTIPG (145 aa)) is disordered. The tract at residues 100–204 (DDLAQLKNLR…ISHREKRQQR (105 aa)) is interaction with RELA. Basic and acidic residues predominate over residues 108-126 (LRSEEQKKKNRKKLPEKPK). A compositionally biased stretch (basic residues) spans 159–168 (EKSKKNKKKS). Ser179 is modified (phosphoserine). Residues 197–207 (HREKRQQRKRD) are compositionally biased toward basic residues. Phosphoserine occurs at positions 215 and 250. Residue Lys263 is modified to N6-acetyllysine. The interval 277-579 (NLTVNGGGWS…KKKKKARRET (303 aa)) is disordered. Phosphoserine is present on residues Ser297, Ser303, and Ser308. Over residues 317 to 329 (SAWTQDTGDTNAN) the composition is skewed to polar residues. A phosphoserine mark is found at Ser341 and Ser366. Composition is skewed to polar residues over residues 351–369 (EPVS…SRNQ), 380–391 (NGLSSADPSSDW), and 410–420 (LKSQEPISNDQ). The lung-homing for mammary tumors stretch occupies residues 378–440 (GLNGLSSADP…EGALPTGKSK (63 aa)). Phosphoserine occurs at positions 412 and 423. Basic and acidic residues predominate over residues 421-431 (KVSDDDKEKGE). Basic residues predominate over residues 438-448 (KSKKKKKKKKK). Over residues 449–470 (QGEDNSHTQDTEDLEKDTREEL) the composition is skewed to basic and acidic residues. Residues Ser454, Ser475, Ser491, and Ser493 each carry the phosphoserine modification. Composition is skewed to polar residues over residues 517-533 (PSIT…SSQV) and 546-565 (NAKQ…NWES). Phosphoserine is present on Ser565. The span at 568–579 (QIKKKKKARRET) shows a compositional bias: basic residues.

Interacts with BCCIP, CREBBP/CBP and RELA/p65. In terms of tissue distribution, in the mammary gland, expressed at the apical surface of epithelial cells lining ducts, as well as in the mammary fat pad. Not detected in the spleen, kidney, lung, or skin; minute amounts seen in the liver. Expressed in Purkinje neurons in the early postnatal and adult cerebellum. Overexpressed in mammary tumors (at protein level).

The protein localises to the endoplasmic reticulum membrane. It localises to the nucleus membrane. The protein resides in the cell junction. Its subcellular location is the tight junction. It is found in the nucleus. The protein localises to the nucleolus. It localises to the cytoplasm. The protein resides in the perinuclear region. In terms of biological role, down-regulates SLC1A2/EAAT2 promoter activity when expressed ectopically. Activates the nuclear factor kappa-B (NF-kappa-B) transcription factor. Promotes anchorage-independent growth of immortalized melanocytes and astrocytes which is a key component in tumor cell expansion. Promotes lung metastasis and also has an effect on bone and brain metastasis, possibly by enhancing the seeding of tumor cells to the target organ endothelium. Induces chemoresistance. This Mus musculus (Mouse) protein is Protein LYRIC (Mtdh).